An 803-amino-acid polypeptide reads, in one-letter code: Ras GTPase-activating protein 4 (803 aa).

C2 domains are found at residues 1–105 (MAKR…SGWA) and 116–232 (VQGE…EGWF). 12 residues coordinate Ca(2+): Asp21, Asp27, Asp74, Asp76, Ser79, Asp82, Asp149, Asp155, Asp202, Asp204, Ser207, and Asp210. In terms of domain architecture, Ras-GAP spans 318-546 (GLAKDFLDLL…AQLKDFITKL (229 aa)). A PH domain is found at 566–673 (PPVKEGPLFI…WLSALRKVSI (108 aa)). The Btk-type zinc-finger motif lies at 675-711 (NTGLLGSYHPGVFRGDKWSCCHQKEKTGQGCDKTRSR). Zn(2+) contacts are provided by His683, Cys694, Cys695, and Cys705. A disordered region spans residues 781–803 (EAHSSSPAGSPPSEPNCLLELQT).

Ca(2+) is required as a cofactor. As to expression, widely expressed.

The protein resides in the cytoplasm. It is found in the cytosol. It localises to the cell membrane. Functionally, ca(2+)-dependent Ras GTPase-activating protein, that switches off the Ras-MAPK pathway following a stimulus that elevates intracellular calcium. Functions as an adaptor for Cdc42 and Rac1 during FcR-mediated phagocytosis. The chain is Ras GTPase-activating protein 4 (RASA4) from Homo sapiens (Human).